Here is a 391-residue protein sequence, read N- to C-terminus: Elongation factor Tu (391 aa).

The tr-type G domain occupies 10–201; sequence KPHVNIGTIG…QVDAYIPTPV (192 aa). The segment at 19-26 is G1; sequence GHVDHGKT. Residue 19 to 26 participates in GTP binding; it reads GHVDHGKT. Thr-26 contributes to the Mg(2+) binding site. Positions 55–59 are G2; the sequence is GITIS. The G3 stretch occupies residues 76-79; that stretch reads DCPG. GTP-binding positions include 76–80 and 131–134; these read DCPGH and NKVD. Residues 131-134 form a G4 region; that stretch reads NKVD. Positions 169–171 are G5; that stretch reads SAL.

This sequence belongs to the TRAFAC class translation factor GTPase superfamily. Classic translation factor GTPase family. EF-Tu/EF-1A subfamily. In terms of assembly, monomer.

The protein localises to the cytoplasm. The enzyme catalyses GTP + H2O = GDP + phosphate + H(+). Its function is as follows. GTP hydrolase that promotes the GTP-dependent binding of aminoacyl-tRNA to the A-site of ribosomes during protein biosynthesis. The protein is Elongation factor Tu of Mesorhizobium japonicum (strain LMG 29417 / CECT 9101 / MAFF 303099) (Mesorhizobium loti (strain MAFF 303099)).